The chain runs to 399 residues: Bifunctional enzyme IspD/IspF (399 aa).

The segment at 1-239 (MHTWALLLAA…SSEKKNMQVP (239 aa)) is 2-C-methyl-D-erythritol 4-phosphate cytidylyltransferase. Residues 240 to 399 (CVGWGYDVHR…AVTALRRVSS (160 aa)) form a 2-C-methyl-D-erythritol 2,4-cyclodiphosphate synthase region. Asp246 and His248 together coordinate a divalent metal cation. Residues 246–248 (DVH) and 273–274 (HS) each bind 4-CDP-2-C-methyl-D-erythritol 2-phosphate. His281 is a binding site for a divalent metal cation. Residues 295–297 (DIG), 300–304 (FPDTD), 371–374 (TTEE), and Phe378 each bind 4-CDP-2-C-methyl-D-erythritol 2-phosphate.

The protein in the N-terminal section; belongs to the IspD/TarI cytidylyltransferase family. IspD subfamily. It in the C-terminal section; belongs to the IspF family. The cofactor is a divalent metal cation.

It carries out the reaction 2-C-methyl-D-erythritol 4-phosphate + CTP + H(+) = 4-CDP-2-C-methyl-D-erythritol + diphosphate. The enzyme catalyses 4-CDP-2-C-methyl-D-erythritol 2-phosphate = 2-C-methyl-D-erythritol 2,4-cyclic diphosphate + CMP. It functions in the pathway isoprenoid biosynthesis; isopentenyl diphosphate biosynthesis via DXP pathway; isopentenyl diphosphate from 1-deoxy-D-xylulose 5-phosphate: step 2/6. Its pathway is isoprenoid biosynthesis; isopentenyl diphosphate biosynthesis via DXP pathway; isopentenyl diphosphate from 1-deoxy-D-xylulose 5-phosphate: step 4/6. Its function is as follows. Bifunctional enzyme that catalyzes the formation of 4-diphosphocytidyl-2-C-methyl-D-erythritol from CTP and 2-C-methyl-D-erythritol 4-phosphate (MEP) (IspD), and catalyzes the conversion of 4-diphosphocytidyl-2-C-methyl-D-erythritol 2-phosphate (CDP-ME2P) to 2-C-methyl-D-erythritol 2,4-cyclodiphosphate (ME-CPP) with a corresponding release of cytidine 5-monophosphate (CMP) (IspF). The sequence is that of Bifunctional enzyme IspD/IspF from Oleidesulfovibrio alaskensis (strain ATCC BAA-1058 / DSM 17464 / G20) (Desulfovibrio alaskensis).